A 127-amino-acid polypeptide reads, in one-letter code: NADPH-dependent 7-cyano-7-deazaguanine reductase (127 aa).

C40 (thioimide intermediate) is an active-site residue. D47 serves as the catalytic Proton donor. Substrate is bound by residues 62 to 64 and 81 to 82; these read VEL and HE.

Belongs to the GTP cyclohydrolase I family. QueF type 1 subfamily.

The protein localises to the cytoplasm. The catalysed reaction is 7-aminomethyl-7-carbaguanine + 2 NADP(+) = 7-cyano-7-deazaguanine + 2 NADPH + 3 H(+). The protein operates within tRNA modification; tRNA-queuosine biosynthesis. Its function is as follows. Catalyzes the NADPH-dependent reduction of 7-cyano-7-deazaguanine (preQ0) to 7-aminomethyl-7-deazaguanine (preQ1). This Campylobacter jejuni subsp. jejuni serotype O:2 (strain ATCC 700819 / NCTC 11168) protein is NADPH-dependent 7-cyano-7-deazaguanine reductase.